Here is a 228-residue protein sequence, read N- to C-terminus: Lipoprotein-releasing system ATP-binding protein LolD (228 aa).

The 221-residue stretch at 7 to 227 folds into the ABC transporter domain; it reads LQLSGIERHY…TIEDGKVVEL (221 aa). Residue 43–50 participates in ATP binding; that stretch reads APSGTGKS.

It belongs to the ABC transporter superfamily. Lipoprotein translocase (TC 3.A.1.125) family. The complex is composed of two ATP-binding proteins (LolD) and two transmembrane proteins (LolC and LolE).

It localises to the cell inner membrane. In terms of biological role, part of the ABC transporter complex LolCDE involved in the translocation of mature outer membrane-directed lipoproteins, from the inner membrane to the periplasmic chaperone, LolA. Responsible for the formation of the LolA-lipoprotein complex in an ATP-dependent manner. The polypeptide is Lipoprotein-releasing system ATP-binding protein LolD (Rhizobium meliloti (strain 1021) (Ensifer meliloti)).